The primary structure comprises 483 residues: Cobyric acid synthase (483 aa).

The 188-residue stretch at 252–439 (KLKVVVPVLT…LHGFLDSEAV (188 aa)) folds into the GATase cobBQ-type domain. The active-site Nucleophile is Cys333. His431 is a catalytic residue.

It belongs to the CobB/CobQ family. CobQ subfamily.

It participates in cofactor biosynthesis; adenosylcobalamin biosynthesis. Catalyzes amidations at positions B, D, E, and G on adenosylcobyrinic A,C-diamide. NH(2) groups are provided by glutamine, and one molecule of ATP is hydrogenolyzed for each amidation. The sequence is that of Cobyric acid synthase from Vibrio vulnificus (strain CMCP6).